The chain runs to 408 residues: UDP-N-acetylglucosamine--dolichyl-phosphate N-acetylglucosaminephosphotransferase (408 aa).

Residues M1 to P10 are Lumenal-facing. A helical transmembrane segment spans residues L11–A38. Over A39–Q58 the chain is Cytoplasmic. UDP-N-acetyl-alpha-D-glucosamine is bound by residues Q44–L46 and E56. L46 contributes to the tunicamycin A1 binding site. A helical transmembrane segment spans residues G59–F78. The Lumenal portion of the chain corresponds to L79–P91. Residues H92–L118 form a helical membrane-spanning segment. Residue N119 coordinates tunicamycin A1. The Cytoplasmic segment spans residues N119–R121. Residues W122–N143 form a helical membrane-spanning segment. A dolichyl phosphate-binding site is contributed by K125. Residues F144–G166 are Lumenal-facing. N146 carries an N-linked (GlcNAc...) asparagine glycan. A helical transmembrane segment spans residues I167 to I186. V178–I186 lines the dolichyl phosphate pocket. Tunicamycin A1 is bound at residue N185. Mg(2+) is bound at residue N185. The Cytoplasmic segment spans residues L187–G192. N191 is a binding site for UDP-N-acetyl-alpha-D-glucosamine. The chain crosses the membrane as a helical span at residues L193–L213. The Lumenal portion of the chain corresponds to E214–R218. Residues D219–N242 form a helical membrane-spanning segment. Residues W243 to V250 are Cytoplasmic-facing. Residues G251–G269 traverse the membrane as a helical segment. D252 provides a ligand contact to tunicamycin A1. D252 is a binding site for Mg(2+). Residues H270 to F271 are Lumenal-facing. The helical transmembrane segment at S272–L293 threads the bilayer. At L294 to H375 the chain is on the cytoplasmic side. R301 to R303 is a UDP-N-acetyl-alpha-D-glucosamine binding site. R303 contacts tunicamycin A1. A helical transmembrane segment spans residues E376 to Q400. Over L401 to V408 the chain is Lumenal.

Belongs to the glycosyltransferase 4 family. As to quaternary structure, homodimer. The cofactor is Mg(2+).

It is found in the endoplasmic reticulum membrane. The enzyme catalyses a di-trans,poly-cis-dolichyl phosphate + UDP-N-acetyl-alpha-D-glucosamine = an N-acetyl-alpha-D-glucosaminyl-diphospho-di-trans,poly-cis-dolichol + UMP. It participates in protein modification; protein glycosylation. With respect to regulation, inhibited by natural nucleoside antibiotic tunicamycin, which acts as a structural analog and competitor of UDP-GlcNAc. Activated by mannosylphosphoryldolichol and phospholipids such as phosphatidylglycerol and phosphatidylcholine. In terms of biological role, UDP-N-acetylglucosamine--dolichyl-phosphate N-acetylglucosaminephosphotransferase that operates in the biosynthetic pathway of dolichol-linked oligosaccharides, the glycan precursors employed in protein asparagine (N)-glycosylation. The assembly of dolichol-linked oligosaccharides begins on the cytosolic side of the endoplasmic reticulum membrane and finishes in its lumen. The sequential addition of sugars to dolichol pyrophosphate produces dolichol-linked oligosaccharides containing fourteen sugars, including two GlcNAcs, nine mannoses and three glucoses. Once assembled, the oligosaccharide is transferred from the lipid to nascent proteins by oligosaccharyltransferases. Catalyzes the initial step of dolichol-linked oligosaccharide biosynthesis, transfering GlcNAc-1-P from cytosolic UDP-GlcNAc onto the carrier lipid dolichyl phosphate (P-dolichol), yielding GlcNAc-P-P-dolichol embedded in the cytoplasmic leaflet of the endoplasmic reticulum membrane. In Homo sapiens (Human), this protein is UDP-N-acetylglucosamine--dolichyl-phosphate N-acetylglucosaminephosphotransferase.